The following is a 183-amino-acid chain: Dual-action ribosomal maturation protein DarP (183 aa).

The protein belongs to the DarP family.

The protein resides in the cytoplasm. Its function is as follows. Member of a network of 50S ribosomal subunit biogenesis factors which assembles along the 30S-50S interface, preventing incorrect 23S rRNA structures from forming. Promotes peptidyl transferase center (PTC) maturation. The sequence is that of Dual-action ribosomal maturation protein DarP from Escherichia coli O6:H1 (strain CFT073 / ATCC 700928 / UPEC).